The sequence spans 1525 residues: Dicer-like protein 1 (1525 aa).

A compositionally biased stretch (acidic residues) spans 37 to 52 (DLQEDDGSSDESDNDE). The tract at residues 37–65 (DLQEDDGSSDESDNDEREDHSKTGVSQQR) is disordered. The Helicase ATP-binding domain maps to 124-305 (LFERAKVQNT…DEATRLEKLL (182 aa)). 137–144 (LDTGSGKT) is an ATP binding site. The DEAH box motif lies at 250-253 (DEAH). The Helicase C-terminal domain occupies 439–605 (QLSPKVQVLR…SFCRTLPEDR (167 aa)). The 91-residue stretch at 641–731 (ATAILARYAS…NSIYHRRLPA (91 aa)) folds into the Dicer dsRNA-binding fold domain. One can recognise a PAZ domain in the interval 881-1009 (ESLTYVRDND…ICIEPLKVSA (129 aa)). RNase III domains are found at residues 1032–1192 (LISL…LSGG) and 1243–1394 (SRKI…VDSD). Positions 1283, 1380, and 1383 each coordinate Mg(2+). A DRBM domain is found at 1428-1496 (TFLHNRLTNE…SEKALAVLDE (69 aa)). Cys-1440, His-1467, Cys-1508, and Cys-1510 together coordinate Zn(2+).

The protein belongs to the helicase family. Dicer subfamily. Mg(2+) serves as cofactor. It depends on Mn(2+) as a cofactor.

In terms of biological role, dicer-like endonuclease involved in cleaving double-stranded RNA in the RNA interference (RNAi) pathway. Produces 21 to 25 bp dsRNAs (siRNAs) which target the selective destruction of homologous RNAs leading to sequence-specific suppression of gene expression, called post-transcriptional gene silencing (PTGS). Part of a broad host defense response against viral infection and transposons. The sequence is that of Dicer-like protein 1 (dcl1) from Aspergillus niger (strain ATCC MYA-4892 / CBS 513.88 / FGSC A1513).